The primary structure comprises 180 residues: ATP-dependent protease subunit HslV (180 aa).

Threonine 7 is an active-site residue. Residues glycine 165, cysteine 168, and threonine 171 each coordinate Na(+).

The protein belongs to the peptidase T1B family. HslV subfamily. A double ring-shaped homohexamer of HslV is capped on each side by a ring-shaped HslU homohexamer. The assembly of the HslU/HslV complex is dependent on binding of ATP.

It is found in the cytoplasm. The catalysed reaction is ATP-dependent cleavage of peptide bonds with broad specificity.. Allosterically activated by HslU binding. In terms of biological role, protease subunit of a proteasome-like degradation complex believed to be a general protein degrading machinery. The chain is ATP-dependent protease subunit HslV from Bacillus cereus (strain ATCC 10987 / NRS 248).